A 475-amino-acid polypeptide reads, in one-letter code: tRNA-2-methylthio-N(6)-dimethylallyladenosine synthase (475 aa).

In terms of domain architecture, MTTase N-terminal spans 2–119; sequence AKLHITTWGC…LPEMINKIRG (118 aa). [4Fe-4S] cluster is bound by residues Cys-11, Cys-48, Cys-82, Cys-156, Cys-160, and Cys-163. In terms of domain architecture, Radical SAM core spans 142 to 374; sequence RAEGPTAFVS…QQRINHQAMQ (233 aa). A TRAM domain is found at 377–440; the sequence is RAMLGTEQRV…TNSLRGEVVR (64 aa).

Belongs to the methylthiotransferase family. MiaB subfamily. In terms of assembly, monomer. [4Fe-4S] cluster is required as a cofactor.

It localises to the cytoplasm. It carries out the reaction N(6)-dimethylallyladenosine(37) in tRNA + (sulfur carrier)-SH + AH2 + 2 S-adenosyl-L-methionine = 2-methylsulfanyl-N(6)-dimethylallyladenosine(37) in tRNA + (sulfur carrier)-H + 5'-deoxyadenosine + L-methionine + A + S-adenosyl-L-homocysteine + 2 H(+). Its function is as follows. Catalyzes the methylthiolation of N6-(dimethylallyl)adenosine (i(6)A), leading to the formation of 2-methylthio-N6-(dimethylallyl)adenosine (ms(2)i(6)A) at position 37 in tRNAs that read codons beginning with uridine. This Actinobacillus pleuropneumoniae serotype 3 (strain JL03) protein is tRNA-2-methylthio-N(6)-dimethylallyladenosine synthase.